The primary structure comprises 215 residues: Elongation factor Ts (215 aa).

An involved in Mg(2+) ion dislocation from EF-Tu region spans residues 80–83 (TDFV).

It belongs to the EF-Ts family.

It is found in the cytoplasm. Its function is as follows. Associates with the EF-Tu.GDP complex and induces the exchange of GDP to GTP. It remains bound to the aminoacyl-tRNA.EF-Tu.GTP complex up to the GTP hydrolysis stage on the ribosome. This is Elongation factor Ts from Heliobacterium modesticaldum (strain ATCC 51547 / Ice1).